Reading from the N-terminus, the 1402-residue chain is DNA-directed RNA polymerase subunit beta' (1402 aa).

4 residues coordinate Zn(2+): Cys-71, Cys-73, Cys-86, and Cys-89. Mg(2+) contacts are provided by Asp-462, Asp-464, and Asp-466. Cys-811, Cys-885, Cys-892, and Cys-895 together coordinate Zn(2+).

This sequence belongs to the RNA polymerase beta' chain family. The RNAP catalytic core consists of 2 alpha, 1 beta, 1 beta' and 1 omega subunit. When a sigma factor is associated with the core the holoenzyme is formed, which can initiate transcription. The cofactor is Mg(2+). It depends on Zn(2+) as a cofactor.

The catalysed reaction is RNA(n) + a ribonucleoside 5'-triphosphate = RNA(n+1) + diphosphate. DNA-dependent RNA polymerase catalyzes the transcription of DNA into RNA using the four ribonucleoside triphosphates as substrates. The chain is DNA-directed RNA polymerase subunit beta' from Rhizobium johnstonii (strain DSM 114642 / LMG 32736 / 3841) (Rhizobium leguminosarum bv. viciae).